Reading from the N-terminus, the 216-residue chain is 3-keto-L-gulonate-6-phosphate decarboxylase UlaD (216 aa).

Aspartate 11 provides a ligand contact to substrate. Glutamate 33 and aspartate 62 together coordinate Mg(2+). Arginine 192 contributes to the substrate binding site.

The protein belongs to the HPS/KGPDC family. KGPDC subfamily. In terms of assembly, homodimer. Requires Mg(2+) as cofactor.

It catalyses the reaction 3-dehydro-L-gulonate 6-phosphate + H(+) = L-xylulose 5-phosphate + CO2. The protein operates within cofactor degradation; L-ascorbate degradation; D-xylulose 5-phosphate from L-ascorbate: step 2/4. Functionally, catalyzes the decarboxylation of 3-keto-L-gulonate-6-P into L-xylulose-5-P. Is involved in the anaerobic L-ascorbate utilization. The polypeptide is 3-keto-L-gulonate-6-phosphate decarboxylase UlaD (Escherichia coli O17:K52:H18 (strain UMN026 / ExPEC)).